Reading from the N-terminus, the 221-residue chain is Protein lethal(2)k10201 (221 aa).

2 consecutive C2H2-type zinc fingers follow at residues 74–97 and 113–138; these read YSCV…TEQH and FSCF…IITH. The disordered stretch occupies residues 146–168; the sequence is FDHSKNRGKQKHQGKSKPNSMEV. The segment covering 151–160 has biased composition (basic residues); sequence NRGKQKHQGK.

Its function is as follows. Vital for development. The chain is Protein lethal(2)k10201 (l(2)k10201) from Drosophila melanogaster (Fruit fly).